Consider the following 425-residue polypeptide: Threonine synthase (425 aa).

Position 105 is an N6-(pyridoxal phosphate)lysine (Lys105).

It belongs to the threonine synthase family. It depends on pyridoxal 5'-phosphate as a cofactor.

The catalysed reaction is O-phospho-L-homoserine + H2O = L-threonine + phosphate. It functions in the pathway amino-acid biosynthesis; L-threonine biosynthesis; L-threonine from L-aspartate: step 5/5. In terms of biological role, catalyzes the gamma-elimination of phosphate from L-phosphohomoserine and the beta-addition of water to produce L-threonine. This is Threonine synthase (thrC) from Haemophilus influenzae (strain ATCC 51907 / DSM 11121 / KW20 / Rd).